The primary structure comprises 705 residues: Translation initiation factor IF-2 (705 aa).

The interval 40–124 (DDQIKALDKK…QPAAPKEIPS (85 aa)) is disordered. The segment covering 41 to 58 (DQIKALDKKFKKEQKNDN) has biased composition (basic and acidic residues). Positions 59–77 (KQSTQNNHQKSNNQNQNKG) are enriched in low complexity. Residues 94-108 (KGNKKNNRNNKKNNK) are compositionally biased toward basic residues. The tr-type G domain maps to 207–376 (ERPAVVTIMG…GLVAEVQELK (170 aa)). The tract at residues 216 to 223 (GHVDHGKT) is G1. 216-223 (GHVDHGKT) contacts GTP. The G2 stretch occupies residues 241–245 (GITQH). The tract at residues 262 to 265 (DTPG) is G3. GTP is bound by residues 262–266 (DTPGH) and 316–319 (NKID). The G4 stretch occupies residues 316–319 (NKID). The G5 stretch occupies residues 352-354 (SAL).

Belongs to the TRAFAC class translation factor GTPase superfamily. Classic translation factor GTPase family. IF-2 subfamily.

Its subcellular location is the cytoplasm. One of the essential components for the initiation of protein synthesis. Protects formylmethionyl-tRNA from spontaneous hydrolysis and promotes its binding to the 30S ribosomal subunits. Also involved in the hydrolysis of GTP during the formation of the 70S ribosomal complex. In Staphylococcus aureus (strain Mu3 / ATCC 700698), this protein is Translation initiation factor IF-2.